The sequence spans 351 residues: Probable dual-specificity RNA methyltransferase RlmN (351 aa).

The active-site Proton acceptor is Glu98. In terms of domain architecture, Radical SAM core spans 104 to 332 (TQKRLTVCVS…ASIRRSRGLD (229 aa)). Cys111 and Cys337 form a disulfide bridge. [4Fe-4S] cluster contacts are provided by Cys118, Cys122, and Cys125. S-adenosyl-L-methionine is bound by residues 165–166 (GE), Ser195, 218–220 (SLH), and Asn294. Cys337 acts as the S-methylcysteine intermediate in catalysis.

Belongs to the radical SAM superfamily. RlmN family. Requires [4Fe-4S] cluster as cofactor.

The protein localises to the cytoplasm. It carries out the reaction adenosine(2503) in 23S rRNA + 2 reduced [2Fe-2S]-[ferredoxin] + 2 S-adenosyl-L-methionine = 2-methyladenosine(2503) in 23S rRNA + 5'-deoxyadenosine + L-methionine + 2 oxidized [2Fe-2S]-[ferredoxin] + S-adenosyl-L-homocysteine. The catalysed reaction is adenosine(37) in tRNA + 2 reduced [2Fe-2S]-[ferredoxin] + 2 S-adenosyl-L-methionine = 2-methyladenosine(37) in tRNA + 5'-deoxyadenosine + L-methionine + 2 oxidized [2Fe-2S]-[ferredoxin] + S-adenosyl-L-homocysteine. Functionally, specifically methylates position 2 of adenine 2503 in 23S rRNA and position 2 of adenine 37 in tRNAs. In Acaryochloris marina (strain MBIC 11017), this protein is Probable dual-specificity RNA methyltransferase RlmN.